The following is a 345-amino-acid chain: uncharacterized protein (345 aa).

The segment at 1–98 is disordered; the sequence is MNDEMKGKSG…ISGKSFIDPE (98 aa). Composition is skewed to basic and acidic residues over residues 18 to 27, 42 to 68, and 76 to 86; these read RSDDDSDKRT, SRAD…EDSP, and PGDETPEKADH.

Belongs to the class IV-like SAM-binding methyltransferase superfamily. RNA methyltransferase TrmH family.

This is an uncharacterized protein from Escherichia coli O157:H7.